We begin with the raw amino-acid sequence, 419 residues long: UPF0761 membrane protein ACIAD3168 (419 aa).

6 helical membrane-spanning segments follow: residues 42-62, 105-125, 148-168, 186-206, 212-232, and 252-272; these read ALTY…LVII, LTVI…STIE, WTII…SSTV, AFIL…ILYW, TVPM…FELL, and AFAA…IVLL.

The protein belongs to the UPF0761 family.

The protein resides in the cell inner membrane. The sequence is that of UPF0761 membrane protein ACIAD3168 from Acinetobacter baylyi (strain ATCC 33305 / BD413 / ADP1).